Reading from the N-terminus, the 179-residue chain is uncharacterized protein (179 aa).

The next 3 helical transmembrane spans lie at 29 to 49 (LLGI…GPLI), 76 to 96 (AKHM…DAYS), and 97 to 117 (GAII…LLWA).

This sequence belongs to the DP1 family.

Its subcellular location is the membrane. This is an uncharacterized protein from Encephalitozoon cuniculi (strain GB-M1) (Microsporidian parasite).